A 334-amino-acid chain; its full sequence is Holliday junction branch migration complex subunit RuvB (334 aa).

The large ATPase domain (RuvB-L) stretch occupies residues Ala4–Tyr186. Residues Ile25, Arg26, Gly67, Lys70, Thr71, Thr72, Glu133 to Tyr135, Arg176, Tyr186, and Arg223 contribute to the ATP site. Thr71 provides a ligand contact to Mg(2+). A small ATPAse domain (RuvB-S) region spans residues Lys187 to Asp257. Positions His260–Lys334 are head domain (RuvB-H). The DNA site is built by Arg315 and Arg320.

It belongs to the RuvB family. Homohexamer. Forms an RuvA(8)-RuvB(12)-Holliday junction (HJ) complex. HJ DNA is sandwiched between 2 RuvA tetramers; dsDNA enters through RuvA and exits via RuvB. An RuvB hexamer assembles on each DNA strand where it exits the tetramer. Each RuvB hexamer is contacted by two RuvA subunits (via domain III) on 2 adjacent RuvB subunits; this complex drives branch migration. In the full resolvosome a probable DNA-RuvA(4)-RuvB(12)-RuvC(2) complex forms which resolves the HJ.

Its subcellular location is the cytoplasm. The enzyme catalyses ATP + H2O = ADP + phosphate + H(+). Its function is as follows. The RuvA-RuvB-RuvC complex processes Holliday junction (HJ) DNA during genetic recombination and DNA repair, while the RuvA-RuvB complex plays an important role in the rescue of blocked DNA replication forks via replication fork reversal (RFR). RuvA specifically binds to HJ cruciform DNA, conferring on it an open structure. The RuvB hexamer acts as an ATP-dependent pump, pulling dsDNA into and through the RuvAB complex. RuvB forms 2 homohexamers on either side of HJ DNA bound by 1 or 2 RuvA tetramers; 4 subunits per hexamer contact DNA at a time. Coordinated motions by a converter formed by DNA-disengaged RuvB subunits stimulates ATP hydrolysis and nucleotide exchange. Immobilization of the converter enables RuvB to convert the ATP-contained energy into a lever motion, pulling 2 nucleotides of DNA out of the RuvA tetramer per ATP hydrolyzed, thus driving DNA branch migration. The RuvB motors rotate together with the DNA substrate, which together with the progressing nucleotide cycle form the mechanistic basis for DNA recombination by continuous HJ branch migration. Branch migration allows RuvC to scan DNA until it finds its consensus sequence, where it cleaves and resolves cruciform DNA. This chain is Holliday junction branch migration complex subunit RuvB, found in Vibrio cholerae serotype O1 (strain ATCC 39315 / El Tor Inaba N16961).